The sequence spans 576 residues: MSATLLKQPLCTVVRQGKQSKVSGLNLLRLKAHLHRQHLSPSLIKLHSELKLDELQTDNTPDYVRLVLRSSVYDVINESPISQGVGLSSRLNTNVILKREDLLPVFSFKLRGAYNMIAKLDDSQRNQGVIACSAGNHAQGVAFAAKHLKIPATIVMPVCTPSIKYQNVSRLGSQVVLYGNDFDEAKAECAKLAEERGLTNIPPFDHPYVIAGQGTVAMEILRQVRTANKIGAVFVPVGGGGLIAGIGAYLKRVAPHIKIIGVETYDAATLHNSLQRNQRTPLPVVGTFADGTSVRMIGEETFRVAQQVVDEVVLVNTDEICAAVKDIFEDTRSIVEPSGALSVAGMKKYISTVHPEIDHTKNTYVPILSGANMNFDRLRFVSERAVLGEGKEVFMLVTLPDVPGAFKKMQKIIHPRSVTEFSYRYNEHRHESSSEVPKAYIYTSFSVVDREKEIKQVMQQLNALGFEAVDISDNELAKSHGRYLVGGASKVPNERIISFEFPERPGALTRFLGGLSDSWNLTLFHYRNHGADIGKVLAGISVPPRENLTFQKFLEDLGYTYHDETDNTVYQKFLKY.

Lys109 is subject to N6-(pyridoxal phosphate)lysine. 2 consecutive ACT-like domains span residues Val393–Asp473 and Arg495–Asp566.

Belongs to the serine/threonine dehydratase family. In terms of assembly, homotetramer. It depends on pyridoxal 5'-phosphate as a cofactor.

It is found in the mitochondrion. The catalysed reaction is L-threonine = 2-oxobutanoate + NH4(+). Its pathway is amino-acid biosynthesis; L-isoleucine biosynthesis; 2-oxobutanoate from L-threonine: step 1/1. With respect to regulation, isoleucine allosterically inhibits while valine allosterically activates this enzyme. This Saccharomyces cerevisiae (strain ATCC 204508 / S288c) (Baker's yeast) protein is Threonine dehydratase, mitochondrial (ILV1).